The following is a 609-amino-acid chain: Proteasome-associated ATPase (609 aa).

Residues 1–25 form a disordered region; sequence MADSERSEAFGTPDDTPLSSNDAAE. A coiled-coil region spans residues 19 to 96; that stretch reads SSNDAAELEQ…LREEVDRLGQ (78 aa). Residue 296-301 coordinates ATP; it reads GCGKTL. Residues 608 to 609 form a docks into pockets in the proteasome alpha-ring region; the sequence is YL.

This sequence belongs to the AAA ATPase family. As to quaternary structure, homohexamer. Assembles into a hexameric ring structure that caps the 20S proteasome core. Strongly interacts with the prokaryotic ubiquitin-like protein Pup through a hydrophobic interface; the interacting region of ARC lies in its N-terminal coiled-coil domain. There is one Pup binding site per ARC hexamer ring. Upon ATP-binding, the C-terminus of ARC interacts with the alpha-rings of the proteasome core, possibly by binding to the intersubunit pockets.

It participates in protein degradation; proteasomal Pup-dependent pathway. ATPase which is responsible for recognizing, binding, unfolding and translocation of pupylated proteins into the bacterial 20S proteasome core particle. May be essential for opening the gate of the 20S proteasome via an interaction with its C-terminus, thereby allowing substrate entry and access to the site of proteolysis. Thus, the C-termini of the proteasomal ATPase may function like a 'key in a lock' to induce gate opening and therefore regulate proteolysis. This Mycobacterium marinum (strain ATCC BAA-535 / M) protein is Proteasome-associated ATPase.